Reading from the N-terminus, the 447-residue chain is N-succinylarginine dihydrolase (447 aa).

Substrate-binding positions include 19–28, N110, and 137–138; these read AGLSFGNEAS and HR. E174 is a catalytic residue. R212 contributes to the substrate binding site. Residue H248 is part of the active site. Substrate is bound by residues D250 and N359. C365 serves as the catalytic Nucleophile.

This sequence belongs to the succinylarginine dihydrolase family. Homodimer.

The catalysed reaction is N(2)-succinyl-L-arginine + 2 H2O + 2 H(+) = N(2)-succinyl-L-ornithine + 2 NH4(+) + CO2. It participates in amino-acid degradation; L-arginine degradation via AST pathway; L-glutamate and succinate from L-arginine: step 2/5. Catalyzes the hydrolysis of N(2)-succinylarginine into N(2)-succinylornithine, ammonia and CO(2). This is N-succinylarginine dihydrolase from Escherichia fergusonii (strain ATCC 35469 / DSM 13698 / CCUG 18766 / IAM 14443 / JCM 21226 / LMG 7866 / NBRC 102419 / NCTC 12128 / CDC 0568-73).